The chain runs to 374 residues: RNA ligase 1 (374 aa).

Positions 37, 54, and 75 each coordinate ATP. The N6-AMP-lysine intermediate role is filled by Lys-99. Glu-159, Lys-240, and Lys-242 together coordinate ATP. Mg(2+) is bound at residue Asp-272.

It belongs to the Tequatrovirus RNA ligase 1 family. Mg(2+) is required as a cofactor.

It catalyses the reaction ATP + (ribonucleotide)n-3'-hydroxyl + 5'-phospho-(ribonucleotide)m = (ribonucleotide)n+m + AMP + diphosphate.. In terms of biological role, involved in countering a host defense mechanism which, following viral infection, activates the host anticodon nuclease and shuts off viral translation. Repairs 5'-PO4 and 3'-OH groups in the cleaved host tRNA. The nick ligation reaction entails three nucleotidyl transfer steps. In the first step, the RNA ligase reacts with ATP in the absence of nucleic acid to form a covalent ligase-AMP intermediate and release pyrophosphate. In step 2, the ligase-AMP binds to the nicked duplex nucleic acid and transfers the adenylate to the 5'-PO4 terminus to form an adenylylated nicked intermediate. In step 3, the RNA ligase directs the attack of the nick 3'-OH on the 5'-phosphoanhydride linkage, resulting in a repaired 3'-5' phosphodiester and release of AMP. This chain is RNA ligase 1 (63), found in Enterobacteria phage T4 (Bacteriophage T4).